A 490-amino-acid chain; its full sequence is GTPase Der (490 aa).

2 EngA-type G domains span residues 3–166 and 196–369; these read PVIA…PKDE and IKIA…KSAV. Residues 9 to 16, 56 to 60, 118 to 121, 202 to 209, 249 to 253, and 314 to 317 contribute to the GTP site; these read GRPNVGKS, DTGGI, NKID, DTAGV, and NKWD. Positions 370-454 constitute a KH-like domain; that stretch reads TRWPTSRLTQ…PIRIEFKGGE (85 aa). The interval 452-490 is disordered; that stretch reads GGENPYEGNKNTLTDRQVNKKRRMMSHHKKADKKRRDKR. Positions 470 to 490 are enriched in basic residues; the sequence is NKKRRMMSHHKKADKKRRDKR.

Belongs to the TRAFAC class TrmE-Era-EngA-EngB-Septin-like GTPase superfamily. EngA (Der) GTPase family. In terms of assembly, associates with the 50S ribosomal subunit.

Its function is as follows. GTPase that plays an essential role in the late steps of ribosome biogenesis. This is GTPase Der from Pseudomonas savastanoi pv. phaseolicola (strain 1448A / Race 6) (Pseudomonas syringae pv. phaseolicola (strain 1448A / Race 6)).